The sequence spans 81 residues: Protein RALF-like 7 (81 aa).

Residues 1–29 (MSARKKNRIHVFFVSIMIIISLVSGFGEG) form the signal peptide. 2 disulfide bridges follow: Cys-46/Cys-54 and Cys-66/Cys-72.

This sequence belongs to the plant rapid alkalinization factor (RALF) family.

The protein resides in the secreted. Its function is as follows. Cell signaling peptide that may regulate plant stress, growth, and development. Mediates a rapid alkalinization of extracellular space by mediating a transient increase in the cytoplasmic Ca(2+) concentration leading to a calcium-dependent signaling events through a cell surface receptor and a concomitant activation of some intracellular mitogen-activated protein kinases. This is Protein RALF-like 7 (RALFL7) from Arabidopsis thaliana (Mouse-ear cress).